The following is a 368-amino-acid chain: tRNA/tmRNA (uracil-C(5))-methyltransferase (368 aa).

S-adenosyl-L-methionine-binding residues include glutamine 192, tyrosine 220, asparagine 225, glutamate 241, and aspartate 301. Catalysis depends on cysteine 326, which acts as the Nucleophile. The active-site Proton acceptor is the glutamate 360.

This sequence belongs to the class I-like SAM-binding methyltransferase superfamily. RNA M5U methyltransferase family. TrmA subfamily.

The enzyme catalyses uridine(54) in tRNA + S-adenosyl-L-methionine = 5-methyluridine(54) in tRNA + S-adenosyl-L-homocysteine + H(+). It carries out the reaction uridine(341) in tmRNA + S-adenosyl-L-methionine = 5-methyluridine(341) in tmRNA + S-adenosyl-L-homocysteine + H(+). Functionally, dual-specificity methyltransferase that catalyzes the formation of 5-methyluridine at position 54 (m5U54) in all tRNAs, and that of position 341 (m5U341) in tmRNA (transfer-mRNA). The protein is tRNA/tmRNA (uracil-C(5))-methyltransferase of Actinobacillus pleuropneumoniae serotype 5b (strain L20).